Consider the following 634-residue polypeptide: DNA-directed RNA polymerase subunit gamma (634 aa).

Zn(2+)-binding residues include Cys-74, Cys-76, Cys-89, and Cys-92. Asp-471, Asp-473, and Asp-475 together coordinate Mg(2+).

Belongs to the RNA polymerase beta' chain family. RpoC1 subfamily. As to quaternary structure, in cyanobacteria the RNAP catalytic core is composed of 2 alpha, 1 beta, 1 beta', 1 gamma and 1 omega subunit. When a sigma factor is associated with the core the holoenzyme is formed, which can initiate transcription. The cofactor is Mg(2+). Zn(2+) serves as cofactor.

The catalysed reaction is RNA(n) + a ribonucleoside 5'-triphosphate = RNA(n+1) + diphosphate. In terms of biological role, DNA-dependent RNA polymerase catalyzes the transcription of DNA into RNA using the four ribonucleoside triphosphates as substrates. The chain is DNA-directed RNA polymerase subunit gamma from Prochlorococcus marinus (strain MIT 9312).